A 457-amino-acid polypeptide reads, in one-letter code: Tubulin gamma-2 chain (457 aa).

142 to 148 serves as a coordination point for GTP; that stretch reads AGGTGSG.

The protein belongs to the tubulin family. In terms of assembly, interacts with Ote. In terms of tissue distribution, expressed in nurse cells and oocytes of developing egg chambers.

The protein localises to the cytoplasm. The protein resides in the cytoskeleton. It localises to the microtubule organizing center. Its subcellular location is the centrosome. It is found in the spindle. Its function is as follows. Tubulin is the major constituent of microtubules. The gamma chain is found at microtubule organizing centers (MTOC) such as the spindle poles or the centrosome, suggesting that it is involved in the minus-end nucleation of microtubule assembly. Required for oocyte activation and consequently for organization of the female meiotic spindle. Essential for centrosome organization and assembly of biastral mitotic spindles in embryos. Plays a role in stabilizing the augmin complex on the meiotic spindle. The polypeptide is Tubulin gamma-2 chain (gammaTub37C) (Drosophila melanogaster (Fruit fly)).